The following is a 971-amino-acid chain: Protein ALWAYS EARLY 1 (971 aa).

Residues 1–11 (MAPTRKSKSVN) are compositionally biased toward basic residues. 5 disordered regions span residues 1–40 (MAPT…LADK), 117–137 (SESE…LKRK), 197–260 (IEDF…MFEN), 326–371 (GLLE…GLED), and 421–507 (PKES…KISL). One can recognise an SANT domain in the interval 40–98 (KLGPQWTKRELVRFYDAYRKYVGDWKKVAAAVRNNRSVEMVETLFCMNRAYLSLPEGTA). Composition is skewed to basic and acidic residues over residues 209-219 (KQLDADDDASR), 332-350 (SSPH…KKSN), and 424-440 (STQD…EVDS). Positions 450 to 470 (SSQGPAKQLKTAKTTVESSSA) are enriched in polar residues.

As to expression, expressed ubiquitously in vegetative and reproductive tissues.

The protein resides in the nucleus. The protein is Protein ALWAYS EARLY 1 (ALY1) of Arabidopsis thaliana (Mouse-ear cress).